The sequence spans 134 residues: Protein Turandot E (134 aa).

Positions 1–38 (MSYTRTIHSSASILKMNSALQISCLLVVLGCLLGSGHC) are cleaved as a signal peptide.

It belongs to the Turandot family.

It is found in the secreted. In terms of biological role, a humoral factor that may play a role in stress tolerance. This chain is Protein Turandot E, found in Drosophila sechellia (Fruit fly).